We begin with the raw amino-acid sequence, 473 residues long: Fumarate hydratase class II (473 aa).

Residues 105 to 107 (SGT), 130 to 133 (HPND), 140 to 142 (SSN), and Thr188 each bind substrate. Residue His189 is the Proton donor/acceptor of the active site. Ser319 is an active-site residue. Residues Ser320 and 325–327 (KVN) contribute to the substrate site.

Belongs to the class-II fumarase/aspartase family. Fumarase subfamily. Homotetramer.

It is found in the cytoplasm. The catalysed reaction is (S)-malate = fumarate + H2O. The protein operates within carbohydrate metabolism; tricarboxylic acid cycle; (S)-malate from fumarate: step 1/1. Functionally, involved in the TCA cycle. Catalyzes the stereospecific interconversion of fumarate to L-malate. The chain is Fumarate hydratase class II from Xylella fastidiosa (strain Temecula1 / ATCC 700964).